Here is a 470-residue protein sequence, read N- to C-terminus: Homogentisate 1,2-dioxygenase (470 aa).

Residues His-356, Glu-362, and His-392 each coordinate Fe cation.

It belongs to the homogentisate dioxygenase family. The cofactor is Fe cation.

It catalyses the reaction homogentisate + O2 = 4-maleylacetoacetate + H(+). Its pathway is amino-acid degradation; L-phenylalanine degradation; acetoacetate and fumarate from L-phenylalanine: step 4/6. The sequence is that of Homogentisate 1,2-dioxygenase (HGO) from Oryza sativa subsp. japonica (Rice).